Here is a 545-residue protein sequence, read N- to C-terminus: Threonine--tRNA ligase catalytic subunit (545 aa).

The catalytic stretch occupies residues 139 to 433 (DHRLIGEKLD…LLEHFKGKLP (295 aa)). Zn(2+)-binding residues include C231, H282, and H410.

It belongs to the class-II aminoacyl-tRNA synthetase family. As to quaternary structure, homodimer. Probably interacts with its editing subunit. Requires Zn(2+) as cofactor.

The protein localises to the cytoplasm. The enzyme catalyses tRNA(Thr) + L-threonine + ATP = L-threonyl-tRNA(Thr) + AMP + diphosphate + H(+). Functionally, catalyzes the attachment of threonine to tRNA(Thr) in a two-step reaction: L-threonine is first activated by ATP to form Thr-AMP and then transferred to the acceptor end of tRNA(Thr). Also activates L-serine and transfers it to tRNA(Thr) but cannot deacylate incorrectly charged amino acid; unlike most archaea the editing function is found in a freestanding protein. This Saccharolobus islandicus (strain M.16.4 / Kamchatka #3) (Sulfolobus islandicus) protein is Threonine--tRNA ligase catalytic subunit.